We begin with the raw amino-acid sequence, 470 residues long: Uronate isomerase (470 aa).

Belongs to the metallo-dependent hydrolases superfamily. Uronate isomerase family.

The catalysed reaction is D-glucuronate = D-fructuronate. The enzyme catalyses aldehydo-D-galacturonate = keto-D-tagaturonate. The protein operates within carbohydrate metabolism; pentose and glucuronate interconversion. This chain is Uronate isomerase, found in Escherichia coli O17:K52:H18 (strain UMN026 / ExPEC).